A 494-amino-acid chain; its full sequence is Inosine-5'-monophosphate dehydrogenase (494 aa).

CBS domains are found at residues 93 to 154 and 158 to 217; these read IIRN…DEKI and MTTN…CKDS. Residues Asp251 and 301 to 303 contribute to the NAD(+) site; that span reads GIG. Positions 303 and 305 each coordinate K(+). Residue Ser306 participates in IMP binding. Residue Cys308 participates in K(+) binding. Cys308 (thioimidate intermediate) is an active-site residue. IMP is bound by residues 341 to 343, 364 to 365, and 388 to 392; these read DGG, GS, and YRGMG. Arg406 serves as the catalytic Proton acceptor. Glu421 contributes to the IMP binding site. 3 residues coordinate K(+): Glu475, Ser476, and His477.

The protein belongs to the IMPDH/GMPR family. In terms of assembly, homotetramer. It depends on K(+) as a cofactor.

It catalyses the reaction IMP + NAD(+) + H2O = XMP + NADH + H(+). It functions in the pathway purine metabolism; XMP biosynthesis via de novo pathway; XMP from IMP: step 1/1. Mycophenolic acid (MPA) is a non-competitive inhibitor that prevents formation of the closed enzyme conformation by binding to the same site as the amobile flap. In contrast, mizoribine monophosphate (MZP) is a competitive inhibitor that induces the closed conformation. MPA is a potent inhibitor of mammalian IMPDHs but a poor inhibitor of the bacterial enzymes. MZP is a more potent inhibitor of bacterial IMPDH. Its function is as follows. Catalyzes the conversion of inosine 5'-phosphate (IMP) to xanthosine 5'-phosphate (XMP), the first committed and rate-limiting step in the de novo synthesis of guanine nucleotides, and therefore plays an important role in the regulation of cell growth. This is Inosine-5'-monophosphate dehydrogenase from Chlorobaculum tepidum (strain ATCC 49652 / DSM 12025 / NBRC 103806 / TLS) (Chlorobium tepidum).